The sequence spans 359 residues: MTSTSKGILRPFLIVCIILGCFVACLLIYIKPTNSWVFSPMESASSVLKMKNFFSRKTDYFNETTILVWVWPFGQTFDLTSCQAMFNIQGCHLTTDRSLYNKSHAVLIHHRDISWDLTNLPQQARPPFQKWIWMNLESPTHTPQKSGIEHLFNLTLTYRRDSDIQVPYGFLTVSTSPFVFEVPSKEKLVCWVVSNWNPEHARVKYYNELSKSIEIHTYGQAFGEYVNDKNLIPTISTCKFYLSFENSIHKDYITEKLYNAFLAGSVPVVLGPSRENYENYIPADSFIHVEDFNSPSELAKYLKEVDKNNKLYLSYFNWRKDFTVNLPRFWESHACLACDHVKRHQEYKSVGNLEKWFWN.

The Cytoplasmic segment spans residues 1-11 (MTSTSKGILRP). The helical; Signal-anchor for type II membrane protein transmembrane segment at 12–32 (FLIVCIILGCFVACLLIYIKP) threads the bilayer. Residues 33–359 (TNSWVFSPME…VGNLEKWFWN (327 aa)) lie on the Lumenal side of the membrane. An N-linked (GlcNAc...) asparagine glycan is attached at asparagine 62. The tract at residues 63 to 168 (ETTILVWVWP…RRDSDIQVPY (106 aa)) is acceptor-binding. A beta-D-galactosyl-(1-&gt;4)-N-acetyl-beta-D-glucosaminyl derivative is bound at residue glutamine 75. 3 disulfide bridges follow: cysteine 82–cysteine 335, cysteine 91–cysteine 338, and cysteine 190–cysteine 238. Residue asparagine 101 is glycosylated (N-linked (GlcNAc...) asparagine). Residue glutamate 137 participates in a beta-D-galactosyl-(1-&gt;4)-N-acetyl-beta-D-glucosaminyl derivative binding. The active-site Nucleophile is the glutamate 137. Glutamate 137 provides a ligand contact to GDP-beta-L-fucose. Asparagine 153 is a glycosylation site (N-linked (GlcNAc...) asparagine). 11 residues coordinate GDP-beta-L-fucose: tyrosine 168, valine 192, serine 194, asparagine 195, arginine 202, valine 226, tyrosine 241, asparagine 246, tyrosine 252, glutamate 255, and lysine 256. The interval 169–326 (GFLTVSTSPF…NWRKDFTVNL (158 aa)) is donor-binding. Residues 327–359 (PRFWESHACLACDHVKRHQEYKSVGNLEKWFWN) form an acceptor-binding region.

The protein belongs to the glycosyltransferase 10 family. In terms of assembly, homodimer. Post-translationally, N-glycosylated with complex-type N-glycans.

The protein localises to the golgi apparatus. It is found in the trans-Golgi network membrane. The protein resides in the golgi apparatus membrane. The enzyme catalyses a beta-D-galactosyl-(1-&gt;4)-N-acetyl-beta-D-glucosaminyl derivative + GDP-beta-L-fucose = a beta-D-galactosyl-(1-&gt;4)-[alpha-L-fucosyl-(1-&gt;3)]-N-acetyl-beta-D-glucosaminyl derivative + GDP + H(+). The catalysed reaction is an alpha-Neu5Ac-(2-&gt;3)-beta-D-Gal-(1-&gt;4)-beta-D-GlcNAc-(1-&gt;3)-beta-D-Gal-(1-&gt;4)-beta-D-GlcNAc derivative + GDP-beta-L-fucose = an alpha-Neu5Ac-(2-&gt;3)-beta-D-Gal-(1-&gt;4)-beta-D-GlcNAc-(1-&gt;3)-beta-D-Gal-(1-&gt;4)-[alpha-L-Fuc-(1-&gt;3)]-beta-D-GlcNAc derivative + GDP + H(+). It catalyses the reaction alpha-N-glycoloylneuraminosyl-(2-&gt;3)-beta-D-galactosyl-(1-&gt;4)-N-acetyl-beta-D-glucosaminyl-(1-&gt;3)-beta-D-galactosyl-(1-&gt;4)-N-acetyl-beta-D-glucosaminyl-(1-&gt;3)-beta-D-galactosyl-(1-&gt;4)-beta-D-glucosyl-(1&lt;-&gt;1')-ceramide + GDP-beta-L-fucose = alpha-N-glycoloylneuraminosyl-(2-&gt;3)-beta-D-galactosyl-(1-&gt;4)-N-acetyl-beta-D-glucosaminyl-(1-&gt;3)-beta-D-galactosyl-(1-&gt;4)-[alpha-L-fucosyl-(1-&gt;3)]-N-acetyl-beta-D-glucosaminyl-(1-&gt;3)-beta-D-galactosyl-(1-&gt;4)-beta-D-glucosyl-(1&lt;-&gt;1')-ceramide + GDP + H(+). It carries out the reaction alpha-D-galactosyl-(1-&gt;3)-beta-D-galactosyl-(1-&gt;4)-N-acetyl-beta-D-glucosaminyl-(1-&gt;3)-beta-D-galactosyl-(1-&gt;4)-beta-D-glucosyl-(1&lt;-&gt;1')-ceramide + GDP-beta-L-fucose = a neolactoside IV(3)-alpha-Gal,III(3)-alpha-Fuc-nLc4Cer + GDP + H(+). The enzyme catalyses a neolactoside nLc4Cer + GDP-beta-L-fucose = a neolactoside III(3)-alpha-Fuc-nLc4Cer + GDP + H(+). The catalysed reaction is an N-acetyl-alpha-neuraminyl-(2-&gt;3)-beta-D-galactosyl-(1-&gt;4)-N-acetyl-beta-D-glucosaminyl derivative + GDP-beta-L-fucose = an alpha-Neu5Ac-(2-&gt;3)-beta-D-Gal-(1-&gt;4)-[alpha-L-Fuc-(1-&gt;3)]-beta-D-GlcNAc derivative + GDP + H(+). It catalyses the reaction beta-D-Gal-(1-&gt;4)-beta-D-GlcNAc-(1-&gt;3)-beta-D-Gal-(1-&gt;4)-D-Glc + GDP-beta-L-fucose = beta-D-Gal-(1-&gt;4)-[alpha-L-Fuc-(1-&gt;3)]-beta-D-GlcNAc-(1-&gt;3)-beta-D-Gal-(1-&gt;4)-D-Glc + GDP + H(+). It carries out the reaction an alpha-L-Fuc-(1-&gt;2)-beta-D-Gal-(1-&gt;4)-beta-D-GlcNAc derivative + GDP-beta-L-fucose = an alpha-L-Fuc-(1-&gt;2)-beta-D-Gal-(1-&gt;4)-[alpha-L-Fuc-(1-&gt;3)]-beta-D-GlcNAc derivative + GDP + H(+). The protein operates within protein modification; protein glycosylation. It participates in glycolipid biosynthesis. With respect to regulation, activated by Mn2+. Functionally, catalyzes alpha(1-&gt;3) linkage of fucosyl moiety transferred from GDP-beta-L-fucose to N-acetyl glucosamine (GlcNAc) within type 2 lactosamine (LacNAc, beta-D-Gal-(1-&gt;4)-beta-D-GlcNAc-) glycan attached to glycolipids and N- or O-linked glycoproteins. Fucosylates distal type 2 LacNAc and its fucosylated (H-type 2 LacNAc) and sialylated (sialyl-type 2 LacNAc) derivatives to form Lewis x (Lex) (CD15) and Lewis y (Ley) antigenic epitopes involved in cell adhesion and differentiation. Generates Lex epitopes in the brain, presumably playing a role in the maintenance of neuronal stemness and neurite outgrowth in progenitor neural cells. Fucosylates the internal type 2 LacNAc unit of the polylactosamine chain to form VIM-2 antigen that serves as recognition epitope for SELE. Can also modify milk oligosaccharides in particular type 2 tetrasaccharide LNnT. The polypeptide is 4-galactosyl-N-acetylglucosaminide 3-alpha-L-fucosyltransferase 9 (Rattus norvegicus (Rat)).